Reading from the N-terminus, the 274-residue chain is Penicillin-insensitive murein endopeptidase (274 aa).

The signal sequence occupies residues 1–19 (MKKTAIALLAWFVSSASLA). 3 disulfides stabilise this stretch: cysteine 44/cysteine 265, cysteine 187/cysteine 235, and cysteine 216/cysteine 223. Histidine 110, histidine 113, aspartate 120, aspartate 147, and histidine 150 together coordinate Zn(2+). The interval 225–274 (DQPLPPPGDGCGAELQSWFEPPKPGTTKPEKKTPPPLPPSCQALLDEHVL) is disordered.

It belongs to the peptidase M74 family. As to quaternary structure, dimer. Requires Zn(2+) as cofactor.

It is found in the periplasm. Its function is as follows. Murein endopeptidase that cleaves the D-alanyl-meso-2,6-diamino-pimelyl amide bond that connects peptidoglycan strands. Likely plays a role in the removal of murein from the sacculus. In Salmonella paratyphi A (strain ATCC 9150 / SARB42), this protein is Penicillin-insensitive murein endopeptidase.